A 235-amino-acid polypeptide reads, in one-letter code: MSNTLYNHCTKLFQSIQRSLDELERGVQDESNTISLAGIQGQISASFLSLSRSIDDYDSMVQRELVPAKKKKATIRIQEFRQKHVQLLEKFDELKAHVRDIAQAKNRKELLGRRGYVNSLDSPYGNSTTDAEIVEGPSDLSRQDGLLKEHDFLGRAESQVDEFLERGRMILGDLVEQGSVLKATKTKVLNAANTLGITRHTLSLINRRSKQDKIIFYCGAFLVFVLFYLIYRWLR.

The Cytoplasmic portion of the chain corresponds to 1 to 213 (MSNTLYNHCT…LINRRSKQDK (213 aa)). A helical; Anchor for type IV membrane protein membrane pass occupies residues 214–234 (IIFYCGAFLVFVLFYLIYRWL). A topological domain (vesicular) is located at residue Arg235.

It belongs to the BOS1 family. As to quaternary structure, component of a SNARE complex consisting of sed5, bos1, bet1 and sec22 or ykt6. Interacts with YIF1 and YIP1.

The protein resides in the golgi apparatus membrane. Its subcellular location is the endoplasmic reticulum membrane. Its function is as follows. SNARE required for targeting and fusion of ER-derived transport vesicles with the Golgi complex. In Schizosaccharomyces pombe (strain 972 / ATCC 24843) (Fission yeast), this protein is Protein transport protein bos1 (bos1).